The chain runs to 389 residues: Formate-dependent phosphoribosylglycinamide formyltransferase (389 aa).

N(1)-(5-phospho-beta-D-ribosyl)glycinamide-binding positions include 12-13 (EL) and Glu72. ATP is bound by residues Arg104, Lys145, 150–155 (SSGKGQ), 185–188 (EAFV), and Glu193. The ATP-grasp domain occupies 109-300 (DLASKELGLR…EFELHARAVL (192 aa)). Glu258 and Glu270 together coordinate Mg(2+). Residues Asp277, Lys348, and 355-356 (RR) each bind N(1)-(5-phospho-beta-D-ribosyl)glycinamide.

Belongs to the PurK/PurT family. In terms of assembly, homodimer.

The catalysed reaction is N(1)-(5-phospho-beta-D-ribosyl)glycinamide + formate + ATP = N(2)-formyl-N(1)-(5-phospho-beta-D-ribosyl)glycinamide + ADP + phosphate + H(+). It functions in the pathway purine metabolism; IMP biosynthesis via de novo pathway; N(2)-formyl-N(1)-(5-phospho-D-ribosyl)glycinamide from N(1)-(5-phospho-D-ribosyl)glycinamide (formate route): step 1/1. Involved in the de novo purine biosynthesis. Catalyzes the transfer of formate to 5-phospho-ribosyl-glycinamide (GAR), producing 5-phospho-ribosyl-N-formylglycinamide (FGAR). Formate is provided by PurU via hydrolysis of 10-formyl-tetrahydrofolate. The polypeptide is Formate-dependent phosphoribosylglycinamide formyltransferase (Chlorobium phaeobacteroides (strain DSM 266 / SMG 266 / 2430)).